The primary structure comprises 412 residues: Imidazolonepropionase (412 aa).

Histidine 71 and histidine 73 together coordinate Fe(3+). Zn(2+) is bound by residues histidine 71 and histidine 73. The 4-imidazolone-5-propanoate site is built by arginine 80, tyrosine 143, and histidine 176. Residue tyrosine 143 coordinates N-formimidoyl-L-glutamate. Position 241 (histidine 241) interacts with Fe(3+). Histidine 241 serves as a coordination point for Zn(2+). Residue glutamine 244 participates in 4-imidazolone-5-propanoate binding. A Fe(3+)-binding site is contributed by aspartate 316. Aspartate 316 lines the Zn(2+) pocket. N-formimidoyl-L-glutamate contacts are provided by asparagine 318 and glycine 320. A 4-imidazolone-5-propanoate-binding site is contributed by threonine 321.

This sequence belongs to the metallo-dependent hydrolases superfamily. HutI family. It depends on Zn(2+) as a cofactor. The cofactor is Fe(3+).

The protein resides in the cytoplasm. It carries out the reaction 4-imidazolone-5-propanoate + H2O = N-formimidoyl-L-glutamate. It participates in amino-acid degradation; L-histidine degradation into L-glutamate; N-formimidoyl-L-glutamate from L-histidine: step 3/3. Catalyzes the hydrolytic cleavage of the carbon-nitrogen bond in imidazolone-5-propanoate to yield N-formimidoyl-L-glutamate. It is the third step in the universal histidine degradation pathway. This chain is Imidazolonepropionase, found in Aromatoleum aromaticum (strain DSM 19018 / LMG 30748 / EbN1) (Azoarcus sp. (strain EbN1)).